A 777-amino-acid chain; its full sequence is DnaJ homolog subfamily C member 16 (777 aa).

The N-terminal stretch at 1–23 (MELGRAGPAGLLLLLLLLLAAQA) is a signal peptide. Topologically, residues 24-531 (APERDPYRVL…DSLFHSNWRE (508 aa)) are cytoplasmic. Residues 28-92 (DPYRVLGVGR…EKRANFDRYG (65 aa)) enclose the J domain. The Thioredoxin domain maps to 117-243 (FDESFFHFPF…LRQFVENLLP (127 aa)). A helical; Anchor for type IV membrane protein transmembrane segment spans residues 532–552 (MMPLLSLLFSALFILFGTVIV). The Extracellular portion of the chain corresponds to 553 to 777 (QAFSDSSDTR…FYIPSWPALD (225 aa)). The tract at residues 558 to 589 (SSDTRDSPASEKKDTTAKTEKNDTSFNKESNS) is disordered. The span at 559–580 (SDTRDSPASEKKDTTAKTEKND) shows a compositional bias: basic and acidic residues. A glycan (N-linked (GlcNAc...) asparagine) is linked at asparagine 627.

It localises to the endoplasmic reticulum membrane. Its function is as follows. Plays an important role in regulating the size of autophagosomes during the formation process. The polypeptide is DnaJ homolog subfamily C member 16 (DNAJC16) (Gallus gallus (Chicken)).